The primary structure comprises 517 residues: MIESLIALIAAIVGLGIGYLVAKKINDAKYEIFVEQAKAKAKAIEYEAELILKDAKNSILNAELEVKKKYEEKTHKIQKDFNQKFDDLSKKEQKLQQEEEKLKEDKEYLCKSQKHIQNLQSDVDKLKNKYQEKLDDVLKILEHSTGLTQNEAKEIILKKVEENSREQIAHIVRKYEEEAKNEAKRKANFIIAQATSRFAGEFAAERLINVINIKNDELKGRIIGKEGRNVKTLEMVLGVDIIIDDTPGAIIVSCFNLYRRAIATKVIELLVEDGRIQPARIEEIHEKVCKEFDSAILEEGETIVMDLGLNKIHPEIVKLIGKLKYRASYGQNALAHSLEVAHLAGIIAAECGGDENLARRAGILHDIGKALTHDFEGSHVDLGAELCKRYKEHPVVINAIYAHHGHEEATSIESAAVCAADTLSAARPGARREVLEAFLKRVSELEDIAKSKEGIKNAYAINAGREIRVIANAQLVNDDESVLLAKEIAAEIQEKMQYPGEIKVNVIRELRAVEYAK.

Residues 1 to 21 form a helical membrane-spanning segment; it reads MIESLIALIAAIVGLGIGYLV. One can recognise a KH domain in the interval 207–273; that stretch reads LINVINIKND…TKVIELLVED (67 aa). Residues 333–426 enclose the HD domain; the sequence is ALAHSLEVAH…VCAADTLSAA (94 aa).

It belongs to the RNase Y family.

Its subcellular location is the cell membrane. Functionally, endoribonuclease that initiates mRNA decay. The sequence is that of Ribonuclease Y from Campylobacter jejuni subsp. jejuni serotype O:23/36 (strain 81-176).